The following is a 98-amino-acid chain: Molybdopterin synthase sulfur carrier subunit (98 aa).

Gly98 carries the 1-thioglycine; alternate modification. A Glycyl adenylate; alternate modification is found at Gly98.

It belongs to the MoaD family. MOCS2A subfamily. In terms of assembly, heterotetramer; composed of 2 small (MOCS2A) and 2 large (MOCS2B) subunits. C-terminal thiocarboxylation occurs in 2 steps, it is first acyl-adenylated (-COAMP) via the hesA/moeB/thiF part of MOCS3, then thiocarboxylated (-COSH) via the rhodanese domain of MOCS3.

It is found in the cytoplasm. The protein operates within cofactor biosynthesis; molybdopterin biosynthesis. In terms of biological role, acts as a sulfur carrier required for molybdopterin biosynthesis. Component of the molybdopterin synthase complex that catalyzes the conversion of precursor Z into molybdopterin by mediating the incorporation of 2 sulfur atoms into precursor Z to generate a dithiolene group. In the complex, serves as sulfur donor by being thiocarboxylated (-COSH) at its C-terminus by MOCS3. After interaction with MOCS2B, the sulfur is then transferred to precursor Z to form molybdopterin. This Aedes aegypti (Yellowfever mosquito) protein is Molybdopterin synthase sulfur carrier subunit.